Here is a 172-residue protein sequence, read N- to C-terminus: Adenylate kinase isoenzyme 6 (172 aa).

5 residues coordinate ATP: Gly-13, Gly-15, Lys-16, Thr-17, and Thr-18. Residues 33–56 form an NMPbind region; that stretch reads NVGDLAREGELYDGFDEEYNCPIL. The segment at 108–118 is LID; the sequence is TRGYSEKKLND. ATP is bound by residues Arg-109 and Lys-148.

The protein belongs to the adenylate kinase family. AK6 subfamily. As to quaternary structure, monomer and homodimer. Interacts with small ribosomal subunit protein uS11. Not a structural component of 43S pre-ribosomes, but transiently interacts with them by binding to uS11. Interacts with COIL (via C-terminus).

Its subcellular location is the cytoplasm. It localises to the nucleus. The protein resides in the nucleoplasm. It is found in the cajal body. The enzyme catalyses AMP + ATP = 2 ADP. The catalysed reaction is ATP + H2O = ADP + phosphate + H(+). Functionally, broad-specificity nucleoside monophosphate (NMP) kinase that catalyzes the reversible transfer of the terminal phosphate group between nucleoside triphosphates and monophosphates. Also has ATPase activity. Involved in the late cytoplasmic maturation steps of the 40S ribosomal particles, specifically 18S rRNA maturation. While NMP activity is not required for ribosome maturation, ATPase activity is. Associates transiently with small ribosomal subunit protein uS11. ATP hydrolysis breaks the interaction with uS11. May temporarily remove uS11 from the ribosome to enable a conformational change of the ribosomal RNA that is needed for the final maturation step of the small ribosomal subunit. Its NMP activity may have a role in nuclear energy homeostasis. May be involved in regulation of Cajal body (CB) formation. The sequence is that of Adenylate kinase isoenzyme 6 from Oryctolagus cuniculus (Rabbit).